The sequence spans 1386 residues: Pleckstrin homology domain-containing family G member 2 (1386 aa).

Disordered stretches follow at residues 1–21 and 36–82; these read MPEGAQGLSLSKPSPSLGCGR and TAPA…PLPG. Composition is skewed to low complexity over residues 8-17 and 45-62; these read LSLSKPSPSL and SPRGSGSSTSLSTVGSEG. S90 is subject to Phosphoserine. In terms of domain architecture, DH spans 102-283; sequence RLERVAREIV…TAVAWYINDM (182 aa). The region spanning 313–411 is the PH domain; sequence ELVLEGAFRG…WIHCLQRLFF (99 aa). 5 disordered regions span residues 436 to 540, 554 to 612, 701 to 739, 790 to 815, and 829 to 859; these read KSKP…PSGT, GLRD…PSPL, EPAEAPATRRELFSGSNPGKLGEPPSGGKAGPEEDEEGV, ILEDSDLGGDSGSGKAGAPSSERTAS, and QQMQRAETRASANAPRRRPRVLAQPQPSPCL. Phosphothreonine is present on T445. Phosphoserine occurs at positions 450 and 469. The span at 592–603 shows a compositional bias: acidic residues; sequence SEEEEEEEEGLE. Phosphoserine occurs at positions 911 and 1049. Disordered regions lie at residues 1037-1099 and 1162-1191; these read PVPK…PLPC and TSPKQGSLPDIQGPAAAPPLPEPSLTDTQV. Composition is skewed to polar residues over residues 1048–1059 and 1073–1086; these read ESPTNIPLTKQG and QPIQPLSWHGSSLD. The residue at position 1257 (T1257) is a Phosphothreonine. A phosphoserine mark is found at S1261 and S1310. 2 disordered regions span residues 1291–1333 and 1367–1386; these read ARRQ…ARRL and TQESMGLHRAQGAPDAPFHM. The segment covering 1301-1317 has biased composition (low complexity); that stretch reads PAASRGSWSSAPTSRAS. Pro residues predominate over residues 1318-1330; that stretch reads SPPPQPQPPPPPA.

Functionally, may be a transforming oncogene with exchange activity for CDC42. May be a guanine-nucleotide exchange factor (GEF) for RAC1 and CDC42. Activated by the binding to subunits beta and gamma of the heterotrimeric guanine nucleotide-binding protein (G protein). Involved in the regulation of actin polymerization. The sequence is that of Pleckstrin homology domain-containing family G member 2 (PLEKHG2) from Homo sapiens (Human).